A 271-amino-acid chain; its full sequence is Virulence regulon transcriptional activator VirF (271 aa).

In terms of domain architecture, HTH araC/xylS-type spans 167 to 265 (ERLQKFMEEN…GCTPSQARLT (99 aa)). DNA-binding regions (H-T-H motif) lie at residues 184–205 (SKFAREFGMGLTTFKELFGTVY) and 232–255 (IVDIAMEAGFSSQSYFTQSYRRRF).

In terms of biological role, transcriptional activator of the Yersinia virulence regulon. This chain is Virulence regulon transcriptional activator VirF (virF), found in Yersinia enterocolitica serotype O:8 / biotype 1B (strain NCTC 13174 / 8081).